The chain runs to 193 residues: Glycerol-3-phosphate acyltransferase (193 aa).

4 helical membrane passes run 2-22 (LIAL…GLIV), 76-96 (VPIH…FPVF), 112-132 (LLFY…VFLF), and 152-172 (CLFV…AFVI).

It belongs to the PlsY family. Probably interacts with PlsX.

The protein resides in the cell membrane. It catalyses the reaction an acyl phosphate + sn-glycerol 3-phosphate = a 1-acyl-sn-glycero-3-phosphate + phosphate. Its pathway is lipid metabolism; phospholipid metabolism. Its function is as follows. Catalyzes the transfer of an acyl group from acyl-phosphate (acyl-PO(4)) to glycerol-3-phosphate (G3P) to form lysophosphatidic acid (LPA). This enzyme utilizes acyl-phosphate as fatty acyl donor, but not acyl-CoA or acyl-ACP. The chain is Glycerol-3-phosphate acyltransferase from Bacillus velezensis (strain DSM 23117 / BGSC 10A6 / LMG 26770 / FZB42) (Bacillus amyloliquefaciens subsp. plantarum).